A 659-amino-acid chain; its full sequence is Pollen receptor-like kinase 6 (659 aa).

The first 26 residues, methionine 1–glutamine 26, serve as a signal peptide directing secretion. Over tyrosine 27 to alanine 266 the chain is Extracellular. A disulfide bridge links cysteine 58 with cysteine 67. LRR repeat units lie at residues leucine 95–leucine 118, glycine 120–aspartate 142, methionine 143–leucine 167, proline 168–serine 190, and lysine 192–aspartate 214. Asparagine 128 carries an N-linked (GlcNAc...) asparagine glycan. Asparagine 179 carries an N-linked (GlcNAc...) asparagine glycan. N-linked (GlcNAc...) asparagine glycosylation is present at asparagine 221. The interval glutamate 226 to leucine 242 is LURE peptides binding. A disulfide bond links cysteine 229 and cysteine 237. Residues glutamate 241–glutamate 260 form a disordered region. A helical membrane pass occupies residues isoleucine 267–isoleucine 287. The Cytoplasmic portion of the chain corresponds to lysine 288–threonine 659. Positions valine 312–glycine 354 are disordered. The segment covering arginine 324–threonine 341 has biased composition (basic and acidic residues). In terms of domain architecture, Protein kinase spans lysine 384 to threonine 659. ATP-binding positions include leucine 390 to alanine 398 and lysine 412. Phosphoserine is present on serine 464. A phosphothreonine mark is found at threonine 484 and threonine 557. Phosphoserine is present on serine 561.

Belongs to the protein kinase superfamily. Ser/Thr protein kinase family. In terms of assembly, interacts with ROPGEF8, ROPGEF9, ROPGEF12, ROPGEF13, PRK3, LIP1 and LIP2. Binds to LURE peptides via its LRR repeats; interacts with LURE1.1, LURE1.2, LURE1.3 and LURE1.4. In terms of tissue distribution, expressed specifically in the pollen tube, predominantly at the tip.

Its subcellular location is the cell membrane. The protein resides in the cytoplasmic granule. Key receptor for sensing species-specific attractants in cooperation with other pollen receptor-like kinases. Essential for pollen tube reorientation toward attractant peptides. The polypeptide is Pollen receptor-like kinase 6 (Arabidopsis thaliana (Mouse-ear cress)).